A 291-amino-acid polypeptide reads, in one-letter code: Succinate--CoA ligase [ADP-forming] subunit alpha 1 (291 aa).

CoA is bound by residues 20–23 (TGFQ), Lys46, and 99–101 (VTE). Substrate is bound at residue Tyr162. Catalysis depends on His249, which acts as the Tele-phosphohistidine intermediate.

The protein belongs to the succinate/malate CoA ligase alpha subunit family. As to quaternary structure, heterotetramer of two alpha and two beta subunits.

The catalysed reaction is succinate + ATP + CoA = succinyl-CoA + ADP + phosphate. The enzyme catalyses GTP + succinate + CoA = succinyl-CoA + GDP + phosphate. The protein operates within carbohydrate metabolism; tricarboxylic acid cycle; succinate from succinyl-CoA (ligase route): step 1/1. Functionally, succinyl-CoA synthetase functions in the citric acid cycle (TCA), coupling the hydrolysis of succinyl-CoA to the synthesis of either ATP or GTP and thus represents the only step of substrate-level phosphorylation in the TCA. The alpha subunit of the enzyme binds the substrates coenzyme A and phosphate, while succinate binding and nucleotide specificity is provided by the beta subunit. The chain is Succinate--CoA ligase [ADP-forming] subunit alpha 1 from Archaeoglobus fulgidus (strain ATCC 49558 / DSM 4304 / JCM 9628 / NBRC 100126 / VC-16).